Reading from the N-terminus, the 496-residue chain is MADLPTPLTNLKIQYTKIFINNEWHDSVSGKKFPVLNPATEEQICLIEEGDKADVDKAVKAARQAFQIGSPWRTMDASERGRLLYKLADLIERDRLLLATMESLNAGKLFPNAYLMDLGGCIKTLRYCAGWADKIQGRTMPMDGDFFCYTRHEPVGVCGQIIPWNFPLVMLIWKIGPALSCGNTVIVKPAEQTPLTALHVASLIKEAGFPPGVVNIVPGYGPTAGAAISSHMDIDKVAFTGSTEVGKLIKEAAGKSNLKRVTLELGGKSPCIVFADADLDNAVEFAHQGVFYHQGQCCIAASRLFVEESIYDEFVRRSVERAKKYVLGNPLAPEVNQGPQIDKEQYNKILDLIESGKKEGAKLECGGGPWGNKGYFIQPTVFSNVTDEMRIAKEEIFGPVQQIMKFKSLDDVIKRANNTTYGLSAGIFTKDLDKAVTVSSALQAGTVWVNCYSVVSAQVPFGGFKMSGNGRELGEYGLQQYTEVKTVTVKISQKNS.

Residues K86 and K123 each carry the N6-acetyllysine modification. NAD(+) is bound by residues 162–165 (IPWN), 188–191 (KPAE), 221–222 (GP), and 241–242 (GS). At K247 the chain carries N6-acetyllysine. E264 (proton acceptor) is an active-site residue. 264 to 266 (ELG) contributes to the NAD(+) binding site. Residue C298 is the Nucleophile of the active site. A mediates interaction with PRMT3 region spans residues 331–496 (LAPEVNQGPQ…VTVKISQKNS (166 aa)). 344–348 (EQYNK) contacts NAD(+). N6-acetyllysine occurs at positions 348 and 362. 395–397 (EIF) is an NAD(+) binding site. K405 is subject to N6-acetyllysine. Phosphoserine is present on S408. N6-acetyllysine occurs at positions 414, 430, and 490.

The protein belongs to the aldehyde dehydrogenase family. Homotetramer. Interacts with PRMT3; the interaction is direct, inhibits ALDH1A1 aldehyde dehydrogenase activity and is independent of the methyltransferase activity of PRMT3. In terms of processing, the N-terminus is blocked most probably by acetylation.

It localises to the cytoplasm. The protein resides in the cytosol. It is found in the cell projection. The protein localises to the axon. It carries out the reaction an aldehyde + NAD(+) + H2O = a carboxylate + NADH + 2 H(+). It catalyses the reaction all-trans-retinal + NAD(+) + H2O = all-trans-retinoate + NADH + 2 H(+). The catalysed reaction is 9-cis-retinal + NAD(+) + H2O = 9-cis-retinoate + NADH + 2 H(+). The enzyme catalyses 11-cis-retinal + NAD(+) + H2O = 11-cis-retinoate + NADH + 2 H(+). It carries out the reaction 13-cis-retinal + NAD(+) + H2O = 13-cis-retinoate + NADH + 2 H(+). It catalyses the reaction (E)-4-hydroxynon-2-enal + NAD(+) + H2O = (E)-4-hydroxynon-2-enoate + NADH + 2 H(+). The catalysed reaction is malonaldehyde + NAD(+) + H2O = 3-oxopropanoate + NADH + 2 H(+). The enzyme catalyses hexanal + NAD(+) + H2O = hexanoate + NADH + 2 H(+). It carries out the reaction propanal + NAD(+) + H2O = propanoate + NADH + 2 H(+). It catalyses the reaction 3-deoxyglucosone + NAD(+) + H2O = 2-dehydro-3-deoxy-D-gluconate + NADH + 2 H(+). The catalysed reaction is acetaldehyde + NAD(+) + H2O = acetate + NADH + 2 H(+). The enzyme catalyses benzaldehyde + NAD(+) + H2O = benzoate + NADH + 2 H(+). It carries out the reaction 4-aminobutanal + NAD(+) + H2O = 4-aminobutanoate + NADH + 2 H(+). It functions in the pathway cofactor metabolism; retinol metabolism. Functionally, cytosolic dehydrogenase that catalyzes the irreversible oxidation of a wide range of aldehydes to their corresponding carboxylic acid. Functions downstream of retinol dehydrogenases and catalyzes the oxidation of retinaldehyde into retinoic acid, the second step in the oxidation of retinol/vitamin A into retinoic acid. This pathway is crucial to control the levels of retinol and retinoic acid, two important molecules which excess can be teratogenic and cytotoxic. Also oxidizes aldehydes resulting from lipid peroxidation like (E)-4-hydroxynon-2-enal/HNE, malonaldehyde and hexanal that form protein adducts and are highly cytotoxic. By participating for instance to the clearance of (E)-4-hydroxynon-2-enal/HNE in the lens epithelium prevents the formation of HNE-protein adducts and lens opacification. Functions also downstream of fructosamine-3-kinase in the fructosamine degradation pathway by catalyzing the oxidation of 3-deoxyglucosone, the carbohydrate product of fructosamine 3-phosphate decomposition, which is itself a potent glycating agent that may react with lysine and arginine side-chains of proteins. Also has an aminobutyraldehyde dehydrogenase activity and is probably part of an alternative pathway for the biosynthesis of GABA/4-aminobutanoate in midbrain, thereby playing a role in GABAergic synaptic transmission. This is Aldehyde dehydrogenase 1A1 from Oryctolagus cuniculus (Rabbit).